The chain runs to 206 residues: Large ribosomal subunit protein uL4 (206 aa).

Residues 49–73 (KTKTISEISGTTKKPFAQKGGGRAR) form a disordered region.

It belongs to the universal ribosomal protein uL4 family. In terms of assembly, part of the 50S ribosomal subunit.

One of the primary rRNA binding proteins, this protein initially binds near the 5'-end of the 23S rRNA. It is important during the early stages of 50S assembly. It makes multiple contacts with different domains of the 23S rRNA in the assembled 50S subunit and ribosome. Its function is as follows. Forms part of the polypeptide exit tunnel. This is Large ribosomal subunit protein uL4 from Paramagnetospirillum magneticum (strain ATCC 700264 / AMB-1) (Magnetospirillum magneticum).